Consider the following 109-residue polypeptide: U4-lycotoxin-Ls1a (109 aa).

Positions 1 to 22 are cleaved as a signal peptide; the sequence is MKVLVLFSVLFLTLFSYSSTEA. The propeptide occupies 23 to 44; the sequence is IDEFDSDAEEDMLSLMANEQVR. A knottin domain region spans residues 45–88; that stretch reads AKACTPRLHDCSHDRHSCCRGELFKDVCYCFYPEGEDKTEVCSC. 4 disulfide bridges follow: cysteine 48-cysteine 63, cysteine 55-cysteine 72, cysteine 62-cysteine 88, and cysteine 74-cysteine 86. Positions 89 to 108 are linear cationic cytotoxin domain; the sequence is QQPKSHKYIEKVVDKAKTVV.

This sequence belongs to the neurotoxin 19 (CSTX) family. 05 (U4-Lctx) subfamily. Expressed by the venom gland.

It is found in the secreted. In terms of biological role, enhances the high-affinity desensitization of human P2RX3 purinoceptors. This is U4-lycotoxin-Ls1a from Lycosa singoriensis (Wolf spider).